Here is a 111-residue protein sequence, read N- to C-terminus: Large ribosomal subunit protein uL22 (111 aa).

This sequence belongs to the universal ribosomal protein uL22 family. Part of the 50S ribosomal subunit.

This protein binds specifically to 23S rRNA; its binding is stimulated by other ribosomal proteins, e.g. L4, L17, and L20. It is important during the early stages of 50S assembly. It makes multiple contacts with different domains of the 23S rRNA in the assembled 50S subunit and ribosome. Its function is as follows. The globular domain of the protein is located near the polypeptide exit tunnel on the outside of the subunit, while an extended beta-hairpin is found that lines the wall of the exit tunnel in the center of the 70S ribosome. This chain is Large ribosomal subunit protein uL22, found in Chlamydia pneumoniae (Chlamydophila pneumoniae).